Reading from the N-terminus, the 405-residue chain is MTMKLPIYLDYSATTPVDPRVAEKMIPYLCEHFGNPASRSHSFGWVADAAVEEAREQVAALVNADPKEIVWTSGATESNNLAIKGAANFYASTKGKHIITVKTEHKAILDTVREMERQGFEATYLDVKEDGLLDLEVFKAAIRPDTVLASVMFVNNEVGVIQPIAELGEICREKGIIFHVDAAQATGKVDIDLSKLKVDLMSFCAHKTYGPKGIGALYVRRKPRIRLEAQMHGGGHERGFRSGTLPTHQIVGMGECFRLAKEEMAEENKRVGALRDKLLKGLQDIEATFVNGDLTQRVAHNLNISFAYVEGESMIMAIKDLAVSSGSACTSASLEPSYVLRALGRDDELAHSSIRFSIGRFTTEEEIDYAIKLLHQKVGKLRELSPLWEMYKDGIDLSTVQWAAH.

Residue Asn156 coordinates pyridoxal 5'-phosphate. Lys207 carries the post-translational modification N6-(pyridoxal phosphate)lysine. Residue Cys329 is the Cysteine persulfide intermediate of the active site. Residue Cys329 participates in [2Fe-2S] cluster binding.

Belongs to the class-V pyridoxal-phosphate-dependent aminotransferase family. NifS/IscS subfamily. Homodimer. Forms a heterotetramer with IscU, interacts with other sulfur acceptors. Pyridoxal 5'-phosphate serves as cofactor.

The protein resides in the cytoplasm. The catalysed reaction is (sulfur carrier)-H + L-cysteine = (sulfur carrier)-SH + L-alanine. It functions in the pathway cofactor biosynthesis; iron-sulfur cluster biosynthesis. Master enzyme that delivers sulfur to a number of partners involved in Fe-S cluster assembly, tRNA modification or cofactor biosynthesis. Catalyzes the removal of elemental sulfur atoms from cysteine to produce alanine. Functions as a sulfur delivery protein for Fe-S cluster synthesis onto IscU, an Fe-S scaffold assembly protein, as well as other S acceptor proteins. This is Cysteine desulfurase IscS from Dechloromonas aromatica (strain RCB).